The following is a 200-amino-acid chain: NADH-quinone oxidoreductase subunit B 2 (200 aa).

[4Fe-4S] cluster contacts are provided by C79, C80, C144, and C174.

The protein belongs to the complex I 20 kDa subunit family. In terms of assembly, NDH-1 is composed of 14 different subunits. Subunits NuoB, C, D, E, F, and G constitute the peripheral sector of the complex. [4Fe-4S] cluster serves as cofactor.

Its subcellular location is the cell inner membrane. The enzyme catalyses a quinone + NADH + 5 H(+)(in) = a quinol + NAD(+) + 4 H(+)(out). In terms of biological role, NDH-1 shuttles electrons from NADH, via FMN and iron-sulfur (Fe-S) centers, to quinones in the respiratory chain. The immediate electron acceptor for the enzyme in this species is believed to be ubiquinone. Couples the redox reaction to proton translocation (for every two electrons transferred, four hydrogen ions are translocated across the cytoplasmic membrane), and thus conserves the redox energy in a proton gradient. This Rhodopseudomonas palustris (strain BisA53) protein is NADH-quinone oxidoreductase subunit B 2.